Consider the following 821-residue polypeptide: E3 ubiquitin-protein ligase RSP5 (821 aa).

Positions 1 to 112 constitute a C2 domain; sequence MGSNLPAQPN…QMGGDEMLTR (112 aa). 2 stretches are compositionally biased toward polar residues: residues 133–144 and 188–201; these read TNLSTPNPNQAN and LNPQRVPSATRPTS. Disordered regions lie at residues 133–239 and 255–359; these read TNLS…GWER and RTTT…YFVD. Residues 202 to 217 show a composition bias toward low complexity; that stretch reads QIAPPNGAPPIANGQG. One can recognise a WW 1 domain in the interval 231 to 264; the sequence is GRLPAGWERREDNLGRTYYVDHNTRTTTWNRPSA. The span at 255-272 shows a compositional bias: polar residues; it reads RTTTWNRPSANYNEQTQR. Residues 281 to 296 are compositionally biased toward basic and acidic residues; that stretch reads LERRAHQNRMLPEDRT. Residues 297–312 show a composition bias toward polar residues; it reads GASSPNLSETQPQAQT. Low complexity predominate over residues 320–339; the sequence is ASNSNVVSMMATGATTAGTG. 2 consecutive WW domains span residues 339-372 and 399-432; these read GELPPGWEQRTTPEGRPYFVDHNTRTTTWVDPRR and GPLPSGWEMRLTNTARVYFVDHNTKTTTWDDPRL. The HECT domain maps to 488–821; sequence SASDLKKRLM…VEETLGFGQE (334 aa). The Glycyl thioester intermediate role is filled by cysteine 789.

This sequence belongs to the RSP5/NEDD4 family. Interacts with apyA and creD.

It is found in the cytoplasm. The enzyme catalyses S-ubiquitinyl-[E2 ubiquitin-conjugating enzyme]-L-cysteine + [acceptor protein]-L-lysine = [E2 ubiquitin-conjugating enzyme]-L-cysteine + N(6)-ubiquitinyl-[acceptor protein]-L-lysine.. Its pathway is protein modification; protein ubiquitination. Functionally, E3 ubiquitin-protein ligase which accepts ubiquitin from an E2 ubiquitin-conjugating enzyme in the form of a thioester and then directly transfers the ubiquitin to targeted substrates. Probably involved in the regulatory network controlling carbon source utilization. Ubiquitinates 'Lys-528' of the uric acid/xanthine transporter uapA at the cell membrane, leading to its internalization, sorting into the endosomal pathway to the vacuolar lumen where it is eventually degraded. This chain is E3 ubiquitin-protein ligase RSP5 (hulA), found in Emericella nidulans (strain FGSC A4 / ATCC 38163 / CBS 112.46 / NRRL 194 / M139) (Aspergillus nidulans).